The chain runs to 459 residues: tRNA modification GTPase MnmE (459 aa).

3 residues coordinate (6S)-5-formyl-5,6,7,8-tetrahydrofolate: arginine 22, glutamate 87, and arginine 126. Residues 221–381 (GINVAICGKP…LEESIEKAVL (161 aa)) form the TrmE-type G domain. Asparagine 231 contributes to the K(+) binding site. GTP-binding positions include 231-236 (NVGKSS), 250-256 (TSIPGTT), and 275-278 (DTAG). Serine 235 lines the Mg(2+) pocket. K(+) is bound by residues threonine 250, isoleucine 252, and threonine 255. Threonine 256 is a binding site for Mg(2+). Lysine 459 provides a ligand contact to (6S)-5-formyl-5,6,7,8-tetrahydrofolate.

The protein belongs to the TRAFAC class TrmE-Era-EngA-EngB-Septin-like GTPase superfamily. TrmE GTPase family. Homodimer. Heterotetramer of two MnmE and two MnmG subunits. The cofactor is K(+).

It is found in the cytoplasm. Its function is as follows. Exhibits a very high intrinsic GTPase hydrolysis rate. Involved in the addition of a carboxymethylaminomethyl (cmnm) group at the wobble position (U34) of certain tRNAs, forming tRNA-cmnm(5)s(2)U34. The protein is tRNA modification GTPase MnmE of Syntrophomonas wolfei subsp. wolfei (strain DSM 2245B / Goettingen).